The following is a 315-amino-acid chain: Olfactory receptor 10A4 (315 aa).

The Extracellular segment spans residues 1 to 26 (MMWENWTIVSEFVLVSFSALSTELQA). Asn-5 carries an N-linked (GlcNAc...) asparagine glycan. Residues 27-47 (LLFLLFLTIYLVTLMGNVLII) form a helical membrane-spanning segment. Residues 48–55 (LVTIADSA) lie on the Cytoplasmic side of the membrane. A helical membrane pass occupies residues 56 to 76 (LQSPMYFFLRNLSFLEIGFNL). Residues 77-100 (VIVPKMLGTLIIQDTTISFLGCAT) are Extracellular-facing. Cys-98 and Cys-190 are joined by a disulfide. The chain crosses the membrane as a helical span at residues 101–121 (QMYFFFFFGAAECCLLATMAY). At 122–140 (DRYVAICDPLHYPVIMGHI) the chain is on the cytoplasmic side. A helical transmembrane segment spans residues 141–161 (SCAQLAAASWFSGFSVATVQT). At 162-198 (TWIFSFPFCGPNRVNHFFCDSPPVIALVCADTSVFEL) the chain is on the extracellular side. The helical transmembrane segment at 199 to 218 (EALTATVLFILFPFLLILGS) threads the bilayer. The Cytoplasmic portion of the chain corresponds to 219-238 (YVRILSTIFRMPSAEGKHQA). A helical transmembrane segment spans residues 239 to 259 (FSTCSAHLLVVSLFYSTAILT). Over 260 to 272 (YFRPQSSASSESK) the chain is Extracellular. Residues 273-293 (KLLSLSSTVVTPMLNPIIYSS) traverse the membrane as a helical segment. Residues 294–315 (RNKEVKAALKRLIHRTLGSQKL) are Cytoplasmic-facing.

It belongs to the G-protein coupled receptor 1 family. In terms of tissue distribution, expressed in the tongue.

Its subcellular location is the cell membrane. Odorant receptor (Potential). May be involved in taste perception. The sequence is that of Olfactory receptor 10A4 (OR10A4) from Homo sapiens (Human).